A 541-amino-acid polypeptide reads, in one-letter code: Light-independent protochlorophyllide reductase subunit B (541 aa).

Asp36 is a binding site for [4Fe-4S] cluster. Residue Asp290 is the Proton donor of the active site. Residue 425-426 participates in substrate binding; sequence GL.

The protein belongs to the ChlB/BchB/BchZ family. As to quaternary structure, protochlorophyllide reductase is composed of three subunits; ChlL, ChlN and ChlB. Forms a heterotetramer of two ChlB and two ChlN subunits. Requires [4Fe-4S] cluster as cofactor.

It catalyses the reaction chlorophyllide a + oxidized 2[4Fe-4S]-[ferredoxin] + 2 ADP + 2 phosphate = protochlorophyllide a + reduced 2[4Fe-4S]-[ferredoxin] + 2 ATP + 2 H2O. Its pathway is porphyrin-containing compound metabolism; chlorophyll biosynthesis (light-independent). Functionally, component of the dark-operative protochlorophyllide reductase (DPOR) that uses Mg-ATP and reduced ferredoxin to reduce ring D of protochlorophyllide (Pchlide) to form chlorophyllide a (Chlide). This reaction is light-independent. The NB-protein (ChlN-ChlB) is the catalytic component of the complex. The chain is Light-independent protochlorophyllide reductase subunit B from Synechococcus sp. (strain CC9902).